Consider the following 341-residue polypeptide: tRNA N6-adenosine threonylcarbamoyltransferase (341 aa).

Positions 111 and 115 each coordinate Fe cation. Substrate is bound by residues 134 to 138 (LVSGG), aspartate 167, glycine 180, and asparagine 277. A Fe cation-binding site is contributed by aspartate 305.

This sequence belongs to the KAE1 / TsaD family. Fe(2+) is required as a cofactor.

It localises to the cytoplasm. It carries out the reaction L-threonylcarbamoyladenylate + adenosine(37) in tRNA = N(6)-L-threonylcarbamoyladenosine(37) in tRNA + AMP + H(+). In terms of biological role, required for the formation of a threonylcarbamoyl group on adenosine at position 37 (t(6)A37) in tRNAs that read codons beginning with adenine. Is involved in the transfer of the threonylcarbamoyl moiety of threonylcarbamoyl-AMP (TC-AMP) to the N6 group of A37, together with TsaE and TsaB. TsaD likely plays a direct catalytic role in this reaction. This chain is tRNA N6-adenosine threonylcarbamoyltransferase, found in Chromobacterium violaceum (strain ATCC 12472 / DSM 30191 / JCM 1249 / CCUG 213 / NBRC 12614 / NCIMB 9131 / NCTC 9757 / MK).